Consider the following 885-residue polypeptide: Probable alpha-glucosidase Os06g0675700 (885 aa).

The N-terminal stretch at 1-33 is a signal peptide; the sequence is MMGSPPAPPARRLGALAVFLLALFLAAPWGVDC. N-linked (GlcNAc...) asparagine glycosylation is found at Asn195, Asn378, and Asn397. Residues Asp443 and Glu446 contribute to the active site. Residues Asn467 and Asn477 are each glycosylated (N-linked (GlcNAc...) asparagine). Asp540 functions as the Proton donor in the catalytic mechanism. N-linked (GlcNAc...) asparagine glycans are attached at residues Asn576 and Asn844.

It belongs to the glycosyl hydrolase 31 family.

The enzyme catalyses Hydrolysis of terminal, non-reducing (1-&gt;4)-linked alpha-D-glucose residues with release of alpha-D-glucose.. In Oryza sativa subsp. japonica (Rice), this protein is Probable alpha-glucosidase Os06g0675700.